Reading from the N-terminus, the 235-residue chain is Pyridoxine 5'-phosphate synthase (235 aa).

Position 6 (asparagine 6) interacts with 3-amino-2-oxopropyl phosphate. Aspartate 8–histidine 9 lines the 1-deoxy-D-xylulose 5-phosphate pocket. Arginine 17 contacts 3-amino-2-oxopropyl phosphate. Histidine 42 (proton acceptor) is an active-site residue. The 1-deoxy-D-xylulose 5-phosphate site is built by arginine 44 and histidine 49. The active-site Proton acceptor is the glutamate 69. Threonine 99 is a binding site for 1-deoxy-D-xylulose 5-phosphate. The Proton donor role is filled by histidine 188. Residues glycine 189 and glycine 210–histidine 211 contribute to the 3-amino-2-oxopropyl phosphate site.

It belongs to the PNP synthase family. In terms of assembly, homooctamer; tetramer of dimers.

The protein localises to the cytoplasm. It catalyses the reaction 3-amino-2-oxopropyl phosphate + 1-deoxy-D-xylulose 5-phosphate = pyridoxine 5'-phosphate + phosphate + 2 H2O + H(+). The protein operates within cofactor biosynthesis; pyridoxine 5'-phosphate biosynthesis; pyridoxine 5'-phosphate from D-erythrose 4-phosphate: step 5/5. Catalyzes the complicated ring closure reaction between the two acyclic compounds 1-deoxy-D-xylulose-5-phosphate (DXP) and 3-amino-2-oxopropyl phosphate (1-amino-acetone-3-phosphate or AAP) to form pyridoxine 5'-phosphate (PNP) and inorganic phosphate. This chain is Pyridoxine 5'-phosphate synthase, found in Wolbachia sp. subsp. Drosophila simulans (strain wRi).